The chain runs to 20 residues: Peptidase T (20 aa).

It belongs to the peptidase M20B family. The cofactor is Zn(2+). Co(2+) serves as cofactor.

The protein localises to the cell envelope. The enzyme catalyses Release of the N-terminal residue from a tripeptide.. Inhibited by the chelating agents EDTA and 1,10-phenanthroline, by bestatin and amastatin, p-hydroxymercuribenzoate and some divalent cations at high concentration. Functionally, cleaves a wide range of dipeptides and tripeptides, but does not display activity against larger peptides. May have a role in the survival of F.nucleatum in the subgingival environment of the mouth. In Fusobacterium nucleatum subsp. polymorphum (Fusobacterium polymorphum), this protein is Peptidase T (pepT).